The chain runs to 341 residues: L-threonine 3-dehydrogenase (341 aa).

Cys-38 is a binding site for Zn(2+). Catalysis depends on charge relay system residues Thr-40 and His-43. Residues His-63, Glu-64, Cys-93, Cys-96, Cys-99, and Cys-107 each coordinate Zn(2+). Residues Ile-175, Asp-195, Arg-200, 262–264 (LGI), and 286–287 (IY) each bind NAD(+).

Belongs to the zinc-containing alcohol dehydrogenase family. Homotetramer. The cofactor is Zn(2+).

It localises to the cytoplasm. The enzyme catalyses L-threonine + NAD(+) = (2S)-2-amino-3-oxobutanoate + NADH + H(+). It functions in the pathway amino-acid degradation; L-threonine degradation via oxydo-reductase pathway; glycine from L-threonine: step 1/2. In terms of biological role, catalyzes the NAD(+)-dependent oxidation of L-threonine to 2-amino-3-ketobutyrate. This is L-threonine 3-dehydrogenase from Shigella dysenteriae serotype 1 (strain Sd197).